The chain runs to 49 residues: Large ribosomal subunit protein bL33 (49 aa).

This sequence belongs to the bacterial ribosomal protein bL33 family.

This chain is Large ribosomal subunit protein bL33 (rpmG), found in Thermotoga maritima (strain ATCC 43589 / DSM 3109 / JCM 10099 / NBRC 100826 / MSB8).